We begin with the raw amino-acid sequence, 249 residues long: Triosephosphate isomerase (249 aa).

Asn9 to Lys11 lines the substrate pocket. His95 acts as the Electrophile in catalysis. The active-site Proton acceptor is Glu166. Substrate-binding positions include Gly172, Ser211, and Gly232 to Gly233.

The protein belongs to the triosephosphate isomerase family. In terms of assembly, homodimer.

It localises to the cytoplasm. The enzyme catalyses D-glyceraldehyde 3-phosphate = dihydroxyacetone phosphate. The protein operates within carbohydrate biosynthesis; gluconeogenesis. It functions in the pathway carbohydrate degradation; glycolysis; D-glyceraldehyde 3-phosphate from glycerone phosphate: step 1/1. Involved in the gluconeogenesis. Catalyzes stereospecifically the conversion of dihydroxyacetone phosphate (DHAP) to D-glyceraldehyde-3-phosphate (G3P). In Legionella pneumophila subsp. pneumophila (strain Philadelphia 1 / ATCC 33152 / DSM 7513), this protein is Triosephosphate isomerase.